Here is a 428-residue protein sequence, read N- to C-terminus: Adenylosuccinate synthetase (428 aa).

GTP is bound by residues 12 to 18 (GDEGKGK) and 40 to 42 (GHT). The Proton acceptor role is filled by Asp13. 2 residues coordinate Mg(2+): Asp13 and Gly40. Residues 13–16 (DEGK), 38–41 (NAGH), Thr128, Arg142, Gln223, Thr238, and Arg302 each bind IMP. The Proton donor role is filled by His41. Residue 298-304 (TTTGRPR) participates in substrate binding. Residues Arg304, 330–332 (SID), and 412–414 (SVG) each bind GTP.

It belongs to the adenylosuccinate synthetase family. As to quaternary structure, homodimer. It depends on Mg(2+) as a cofactor.

The protein resides in the cytoplasm. The catalysed reaction is IMP + L-aspartate + GTP = N(6)-(1,2-dicarboxyethyl)-AMP + GDP + phosphate + 2 H(+). The protein operates within purine metabolism; AMP biosynthesis via de novo pathway; AMP from IMP: step 1/2. Plays an important role in the de novo pathway of purine nucleotide biosynthesis. Catalyzes the first committed step in the biosynthesis of AMP from IMP. This Shouchella clausii (strain KSM-K16) (Alkalihalobacillus clausii) protein is Adenylosuccinate synthetase.